Consider the following 738-residue polypeptide: 1,4-alpha-glucan branching enzyme GlgB (738 aa).

The active-site Nucleophile is the Asp-399. The active-site Proton donor is Glu-452.

The protein belongs to the glycosyl hydrolase 13 family. GlgB subfamily. As to quaternary structure, monomer.

The enzyme catalyses Transfers a segment of a (1-&gt;4)-alpha-D-glucan chain to a primary hydroxy group in a similar glucan chain.. It functions in the pathway glycan biosynthesis; glycogen biosynthesis. Its function is as follows. Catalyzes the formation of the alpha-1,6-glucosidic linkages in glycogen by scission of a 1,4-alpha-linked oligosaccharide from growing alpha-1,4-glucan chains and the subsequent attachment of the oligosaccharide to the alpha-1,6 position. In Chlamydia trachomatis serovar L2b (strain UCH-1/proctitis), this protein is 1,4-alpha-glucan branching enzyme GlgB.